Here is a 160-residue protein sequence, read N- to C-terminus: 2-C-methyl-D-erythritol 2,4-cyclodiphosphate synthase (160 aa).

A divalent metal cation-binding residues include D10 and H12. Residues 10–12 (DVH) and 36–37 (HS) contribute to the 4-CDP-2-C-methyl-D-erythritol 2-phosphate site. H44 serves as a coordination point for a divalent metal cation. 4-CDP-2-C-methyl-D-erythritol 2-phosphate-binding positions include 58 to 60 (DIG), 63 to 67 (FPDTD), 102 to 108 (AQAPKMA), 134 to 137 (TTTE), F141, and R144.

This sequence belongs to the IspF family. Homotrimer. The cofactor is a divalent metal cation.

The enzyme catalyses 4-CDP-2-C-methyl-D-erythritol 2-phosphate = 2-C-methyl-D-erythritol 2,4-cyclic diphosphate + CMP. It functions in the pathway isoprenoid biosynthesis; isopentenyl diphosphate biosynthesis via DXP pathway; isopentenyl diphosphate from 1-deoxy-D-xylulose 5-phosphate: step 4/6. In terms of biological role, involved in the biosynthesis of isopentenyl diphosphate (IPP) and dimethylallyl diphosphate (DMAPP), two major building blocks of isoprenoid compounds. Catalyzes the conversion of 4-diphosphocytidyl-2-C-methyl-D-erythritol 2-phosphate (CDP-ME2P) to 2-C-methyl-D-erythritol 2,4-cyclodiphosphate (ME-CPP) with a corresponding release of cytidine 5-monophosphate (CMP). The chain is 2-C-methyl-D-erythritol 2,4-cyclodiphosphate synthase from Shewanella denitrificans (strain OS217 / ATCC BAA-1090 / DSM 15013).